The sequence spans 426 residues: Phytoene synthase 3, chloroplastic (426 aa).

The N-terminal 52 residues, 1-52, are a transit peptide targeting the chloroplast; sequence MMSTSRAVKSPACAARRRQWSADAPNRTATFLACRHGRRLGGGGGAPCSVRA.

This sequence belongs to the phytoene/squalene synthase family. In terms of tissue distribution, expressed in roots and endosperm.

Its subcellular location is the plastid. The protein resides in the chloroplast. It localises to the plastoglobule. It catalyses the reaction 2 (2E,6E,10E)-geranylgeranyl diphosphate = 15-cis-phytoene + 2 diphosphate. In terms of biological role, catalyzes the conversion of geranylgeranyl diphosphate to phytoene. Mediates the first committed step in carotenoid biosynthesis. May play a role in regulating carotenoid flux in response to abiotic stress in roots. May control flux to carotenoid precursors that are required for abiotic stress-induced abscisic acid (ABA) formation in roots. This Zea mays (Maize) protein is Phytoene synthase 3, chloroplastic.